A 630-amino-acid polypeptide reads, in one-letter code: Alpha-1,3-mannosyltransferase MNT3 (630 aa).

Topologically, residues 1–14 (MLKSLKSRRLILKR) are cytoplasmic. Residues 15-31 (LVTLLLSLFFSYLIFSA) form a helical; Signal-anchor for type II membrane protein membrane-spanning segment. At 32–630 (SRNVTSSNKL…NDISRTWNAN (599 aa)) the chain is on the lumenal side. 2 N-linked (GlcNAc...) asparagine glycosylation sites follow: Asn34 and Asn168.

This sequence belongs to the MNN1/MNT family.

Its subcellular location is the golgi apparatus membrane. Its pathway is protein modification; protein glycosylation. Mannosyltransferase involved in adding the 4th and 5th mannose residues of O-linked glycans. The protein is Alpha-1,3-mannosyltransferase MNT3 (MNT3) of Saccharomyces cerevisiae (strain ATCC 204508 / S288c) (Baker's yeast).